Reading from the N-terminus, the 277-residue chain is Thymidylate synthase (277 aa).

Residues Arg27 and 132–133 contribute to the dUMP site; that span reads RR. Cys152 acts as the Nucleophile in catalysis. DUMP contacts are provided by residues 179 to 182, Asn190, and 220 to 222; these read RSAD and HVY. Asp182 provides a ligand contact to (6R)-5,10-methylene-5,6,7,8-tetrahydrofolate. Ala276 serves as a coordination point for (6R)-5,10-methylene-5,6,7,8-tetrahydrofolate.

Belongs to the thymidylate synthase family. Bacterial-type ThyA subfamily. As to quaternary structure, homodimer.

The protein resides in the cytoplasm. The catalysed reaction is dUMP + (6R)-5,10-methylene-5,6,7,8-tetrahydrofolate = 7,8-dihydrofolate + dTMP. The protein operates within pyrimidine metabolism; dTTP biosynthesis. Its function is as follows. Catalyzes the reductive methylation of 2'-deoxyuridine-5'-monophosphate (dUMP) to 2'-deoxythymidine-5'-monophosphate (dTMP) while utilizing 5,10-methylenetetrahydrofolate (mTHF) as the methyl donor and reductant in the reaction, yielding dihydrofolate (DHF) as a by-product. This enzymatic reaction provides an intracellular de novo source of dTMP, an essential precursor for DNA biosynthesis. This chain is Thymidylate synthase, found in Albidiferax ferrireducens (strain ATCC BAA-621 / DSM 15236 / T118) (Rhodoferax ferrireducens).